A 678-amino-acid polypeptide reads, in one-letter code: Protein distal antenna (678 aa).

An HTH psq-type domain is found at 7-58; the sequence is TKGKRPLRSLTPRDKIHAIQRIHDGESKASVARDIGVPESTLRGWCKNEDKL. Residues 34 to 54 constitute a DNA-binding region (H-T-H motif); that stretch reads KASVARDIGVPESTLRGWCKN. Disordered regions lie at residues 232-310, 344-381, 445-528, 541-592, and 645-678; these read GAGN…GGPM, GVTS…PSGS, KETE…TSEC, GMEA…DEEE, and NETP…RRRK. Composition is skewed to polar residues over residues 241–254 and 349–363; these read PSGQ…SPRS and PIRS…QLAQ. Ser251 and Ser254 each carry phosphoserine. Positions 372-381 are enriched in low complexity; it reads LTPSSTPSGS. Polar residues predominate over residues 449–461; it reads TPSVRSLSSNEQN. Residues 462-478 show a composition bias toward acidic residues; it reads PEADEATETDLDGEVEP. Residues 495 to 508 are compositionally biased toward polar residues; it reads TPSQSPIAHSSGSR. A compositionally biased stretch (low complexity) spans 570 to 586; that stretch reads NNNDVSASNNNNNNNSN. A compositionally biased stretch (acidic residues) spans 657 to 667; it reads EDSEEHAAEEE.

Homomers. Interacts with itself, danr, ey and dac to form a complex (or complexes) containing the RD factors. Coexpressed with danr in the presumptive distal antenna, but not in the leg imaginal disk. Both proteins are also expressed in the brain and the eye region of the eye-antenna disk. First detected in early L3 eye disks in cells surrounding the newly initiated MF. Levels are uniform and high anterior to the furrow, lower levels within and posterior to the furrow. Limited expression is seen in small groups of cells in leg and wing. These appear in the location of prominent sense organ progenitors at relatively late stages of disk development.

It is found in the nucleus. Functionally, probable transcription factor with a role in the retinal determination (RD) network. Regulates ato expression and is required for normal R8 induction and differentiation. Danr appears to repress Dan expression, but Dan is required for Danr expression anterior to the morphogenetic furrow (MF). Dan and Danr lie downstream of so and require dac function for highest levels of expression. Contributes to differentiation of antenna-specific characteristics; effector gene that acts downstream of homothorax (hth), Distal-less (Dll), cut (ct) and spineless (ss) genes to control differentiation of distal antennal structures. The sequence is that of Protein distal antenna from Drosophila melanogaster (Fruit fly).